Here is a 115-residue protein sequence, read N- to C-terminus: Tyrosine-protein phosphatase 22 (115 aa).

One can recognise a Tyrosine-protein phosphatase domain in the interval 1–115; it reads WLMIVEQKCR…ETGGDAPMVV (115 aa). A substrate-binding site is contributed by D83.

Belongs to the protein-tyrosine phosphatase family.

The catalysed reaction is O-phospho-L-tyrosyl-[protein] + H2O = L-tyrosyl-[protein] + phosphate. This chain is Tyrosine-protein phosphatase 22 (STY-22), found in Styela plicata (Wrinkled sea squirt).